The following is a 325-amino-acid chain: Xylosidase/arabinosidase (325 aa).

Asp16 functions as the Proton acceptor in the catalytic mechanism. The Proton donor role is filled by Glu224.

Belongs to the glycosyl hydrolase 43 family.

The catalysed reaction is Hydrolysis of (1-&gt;4)-beta-D-xylans, to remove successive D-xylose residues from the non-reducing termini.. It catalyses the reaction Hydrolysis of terminal non-reducing alpha-L-arabinofuranoside residues in alpha-L-arabinosides.. The polypeptide is Xylosidase/arabinosidase (xsa) (Bacteroides ovatus).